The following is a 670-amino-acid chain: DNA ligase (670 aa).

NAD(+) is bound by residues 36–40, 85–86, and E116; these read DAQYD and SL. The active-site N6-AMP-lysine intermediate is the K118. Positions 139, 174, 290, and 314 each coordinate NAD(+). Residues C408, C411, C426, and C431 each coordinate Zn(2+). In terms of domain architecture, BRCT spans 591–670; the sequence is STDQTLSGKT…QDFVKLLQQQ (80 aa).

This sequence belongs to the NAD-dependent DNA ligase family. LigA subfamily. The cofactor is Mg(2+). It depends on Mn(2+) as a cofactor.

It catalyses the reaction NAD(+) + (deoxyribonucleotide)n-3'-hydroxyl + 5'-phospho-(deoxyribonucleotide)m = (deoxyribonucleotide)n+m + AMP + beta-nicotinamide D-nucleotide.. Functionally, DNA ligase that catalyzes the formation of phosphodiester linkages between 5'-phosphoryl and 3'-hydroxyl groups in double-stranded DNA using NAD as a coenzyme and as the energy source for the reaction. It is essential for DNA replication and repair of damaged DNA. This is DNA ligase from Desulforamulus reducens (strain ATCC BAA-1160 / DSM 100696 / MI-1) (Desulfotomaculum reducens).